A 513-amino-acid polypeptide reads, in one-letter code: Protein disulfide-isomerase (513 aa).

The N-terminal stretch at 1–25 (MAISKVWISLLLALAVVLSAPAARA) is a signal peptide. The Thioredoxin 1 domain maps to 26–149 (EEAAAAEEAA…IVEYLKKQVG (124 aa)). Catalysis depends on nucleophile residues Cys-67 and Cys-70. Cys-67 and Cys-70 are disulfide-bonded. An N-linked (GlcNAc...) asparagine glycan is attached at Asn-282. The 120-residue stretch at 369 to 488 (FRKSEPIPEA…IVDYIRKNKE (120 aa)) folds into the Thioredoxin 2 domain. Catalysis depends on nucleophile residues Cys-411 and Cys-414. A disulfide bond links Cys-411 and Cys-414. The span at 491-507 (GQAAAATEKAAEPAATE) shows a compositional bias: low complexity. Residues 491 to 513 (GQAAAATEKAAEPAATEPLKDEL) are disordered. The short motif at 510–513 (KDEL) is the Prevents secretion from ER element.

The protein belongs to the protein disulfide isomerase family.

It localises to the endoplasmic reticulum lumen. The catalysed reaction is Catalyzes the rearrangement of -S-S- bonds in proteins.. Its function is as follows. Participates in the folding of proteins containing disulfide bonds, may be involved in glycosylation, prolyl hydroxylation and triglyceride transfer. The protein is Protein disulfide-isomerase (PDI) of Hordeum vulgare (Barley).